We begin with the raw amino-acid sequence, 223 residues long: MNSIWARLRLASSQLPIGGYSYSQGLEAALDNGWVRDAESARTWLVDQLQLNLARFEAPLLAGLLRAALAGDWAACDAASERHRASRETRELAQESRQMGFSLQQLLEALPELDDAGRAWLARQDPPNLAAAWAMAARAWRLDAEEALSAWFWNWLENQLAVLMKTLPLGQLAAQKLASSLLPDLDRACAEALRRPAVEGSAAFGLALASMTHETQYSRLFRS.

This sequence belongs to the UreF family. In terms of assembly, ureD, UreF and UreG form a complex that acts as a GTP-hydrolysis-dependent molecular chaperone, activating the urease apoprotein by helping to assemble the nickel containing metallocenter of UreC. The UreE protein probably delivers the nickel.

The protein localises to the cytoplasm. Functionally, required for maturation of urease via the functional incorporation of the urease nickel metallocenter. This chain is Urease accessory protein UreF, found in Pseudomonas paraeruginosa (strain DSM 24068 / PA7) (Pseudomonas aeruginosa (strain PA7)).